We begin with the raw amino-acid sequence, 690 residues long: Elongation factor G (690 aa).

A tr-type G domain is found at glutamate 8–isoleucine 283. GTP contacts are provided by residues alanine 17 to threonine 24, aspartate 81 to histidine 85, and asparagine 135 to aspartate 138.

This sequence belongs to the TRAFAC class translation factor GTPase superfamily. Classic translation factor GTPase family. EF-G/EF-2 subfamily.

The protein resides in the cytoplasm. In terms of biological role, catalyzes the GTP-dependent ribosomal translocation step during translation elongation. During this step, the ribosome changes from the pre-translocational (PRE) to the post-translocational (POST) state as the newly formed A-site-bound peptidyl-tRNA and P-site-bound deacylated tRNA move to the P and E sites, respectively. Catalyzes the coordinated movement of the two tRNA molecules, the mRNA and conformational changes in the ribosome. The sequence is that of Elongation factor G from Rickettsia canadensis (strain McKiel).